Reading from the N-terminus, the 151-residue chain is MNKTITPNPETLDQKWYVIDAADQRLGRLASEVAQILRGKNKPTFTPHMDTGDFVIIVNAEKVVVTGKKSSQKLYRRHSGRPGGMKVETFEKLQARLPERIVEHAVKGMLPKNSLGRKLFTKLKVYTGPTHPHQAQQPETLIVNTIPTGEN.

Belongs to the universal ribosomal protein uL13 family. As to quaternary structure, part of the 50S ribosomal subunit.

This protein is one of the early assembly proteins of the 50S ribosomal subunit, although it is not seen to bind rRNA by itself. It is important during the early stages of 50S assembly. This is Large ribosomal subunit protein uL13 from Rippkaea orientalis (strain PCC 8801 / RF-1) (Cyanothece sp. (strain PCC 8801)).